The chain runs to 136 residues: Small ribosomal subunit protein eS17B (136 aa).

Belongs to the eukaryotic ribosomal protein eS17 family. As to quaternary structure, component of the small ribosomal subunit (SSU). Mature yeast ribosomes consist of a small (40S) and a large (60S) subunit. The 40S small subunit contains 1 molecule of ribosomal RNA (18S rRNA) and 33 different proteins (encoded by 57 genes). The large 60S subunit contains 3 rRNA molecules (25S, 5.8S and 5S rRNA) and 46 different proteins (encoded by 81 genes).

It localises to the cytoplasm. Functionally, component of the ribosome, a large ribonucleoprotein complex responsible for the synthesis of proteins in the cell. The small ribosomal subunit (SSU) binds messenger RNAs (mRNAs) and translates the encoded message by selecting cognate aminoacyl-transfer RNA (tRNA) molecules. The large subunit (LSU) contains the ribosomal catalytic site termed the peptidyl transferase center (PTC), which catalyzes the formation of peptide bonds, thereby polymerizing the amino acids delivered by tRNAs into a polypeptide chain. The nascent polypeptides leave the ribosome through a tunnel in the LSU and interact with protein factors that function in enzymatic processing, targeting, and the membrane insertion of nascent chains at the exit of the ribosomal tunnel. The protein is Small ribosomal subunit protein eS17B of Saccharomyces cerevisiae (strain ATCC 204508 / S288c) (Baker's yeast).